The sequence spans 197 residues: Phosphoheptose isomerase (197 aa).

One can recognise an SIS domain in the interval 34–196; sequence MVHCLLGGNK…DRTLFPQDEQ (163 aa). 49 to 51 contributes to the substrate binding site; the sequence is NGG. H58 and E62 together coordinate Zn(2+). Substrate is bound by residues E62, 91-92, 117-119, S122, and Q172; these read ND and STS. The Zn(2+) site is built by Q172 and H180.

Belongs to the SIS family. GmhA subfamily. In terms of assembly, homotetramer. It depends on Zn(2+) as a cofactor.

The protein resides in the cytoplasm. It carries out the reaction 2 D-sedoheptulose 7-phosphate = D-glycero-alpha-D-manno-heptose 7-phosphate + D-glycero-beta-D-manno-heptose 7-phosphate. It participates in carbohydrate biosynthesis; D-glycero-D-manno-heptose 7-phosphate biosynthesis; D-glycero-alpha-D-manno-heptose 7-phosphate and D-glycero-beta-D-manno-heptose 7-phosphate from sedoheptulose 7-phosphate: step 1/1. In terms of biological role, catalyzes the isomerization of sedoheptulose 7-phosphate in D-glycero-D-manno-heptose 7-phosphate. This Shewanella baltica (strain OS223) protein is Phosphoheptose isomerase.